A 337-amino-acid polypeptide reads, in one-letter code: uncharacterized protein (337 aa).

2 consecutive transmembrane segments (helical) span residues 4-24 (FIFFFKNYCYISGSMLLFSLI) and 26-46 (LLLWIISLYCVGLVFWILFVL).

The protein belongs to the plectrovirus ORF2 family.

It localises to the host membrane. This is an uncharacterized protein from Spiroplasma virus SpV1-R8A2 B (SpV1).